The primary structure comprises 446 residues: Aspartokinase (446 aa).

Residues 250 to 294 form the RPE1 insert domain; sequence IPLVKSTYMEESALNTKHSTKIDIPEDASGSTYKLPIELALQNRY.

Belongs to the aspartokinase family.

The catalysed reaction is L-aspartate + ATP = 4-phospho-L-aspartate + ADP. It functions in the pathway amino-acid biosynthesis; L-lysine biosynthesis via DAP pathway; (S)-tetrahydrodipicolinate from L-aspartate: step 1/4. Its pathway is amino-acid biosynthesis; L-methionine biosynthesis via de novo pathway; L-homoserine from L-aspartate: step 1/3. The protein operates within amino-acid biosynthesis; L-threonine biosynthesis; L-threonine from L-aspartate: step 1/5. The protein is Aspartokinase (lysC) of Rickettsia prowazekii (strain Madrid E).